The sequence spans 291 residues: MFIIELIKGIILGVVEGLTEFAPVSSTGHMILVDDMWLKSSEFLGSQSAFTFKIVIQLGSVFAAAWVFRERFLEILHIGKHKHVEGDNNQQRRSKPRRLNLLHVLVGMVPAGILGLLFDDFIEEHLFSVPTVMIGLFVGAIYMIIADKYSAKVKNPQTVDQINYFQAFVIGISQAVAMWPGFSRSGSTISTGVLMKLNHKAASDFTFIMAVPIMLAASGLSLLKHYQDIQITDIPFYILGFLAAFTVGLIAIKTFLHLINKIKLIPFAIYRIVLVIFIAILYFGFGIGKGI.

The next 8 membrane-spanning stretches (helical) occupy residues 1–21, 48–68, 102–122, 126–146, 162–182, 203–223, 236–256, and 267–287; these read MFIIELIKGIILGVVEGLTEF, SAFTFKIVIQLGSVFAAAWVF, LHVLVGMVPAGILGLLFDDFI, LFSVPTVMIGLFVGAIYMIIA, INYFQAFVIGISQAVAMWPGF, SDFTFIMAVPIMLAASGLSLL, FYILGFLAAFTVGLIAIKTFL, and FAIYRIVLVIFIAILYFGFGI.

The protein belongs to the UppP family.

Its subcellular location is the cell membrane. It carries out the reaction di-trans,octa-cis-undecaprenyl diphosphate + H2O = di-trans,octa-cis-undecaprenyl phosphate + phosphate + H(+). Its function is as follows. Catalyzes the dephosphorylation of undecaprenyl diphosphate (UPP). Confers resistance to bacitracin. The polypeptide is Undecaprenyl-diphosphatase (Staphylococcus aureus (strain MSSA476)).